Consider the following 383-residue polypeptide: 8-amino-7-oxononanoate synthase (383 aa).

Position 23 (arginine 23) interacts with substrate. 110 to 111 contacts pyridoxal 5'-phosphate; the sequence is GF. Histidine 135 lines the substrate pocket. Pyridoxal 5'-phosphate contacts are provided by serine 181, histidine 209, and threonine 235. The residue at position 238 (lysine 238) is an N6-(pyridoxal phosphate)lysine. Threonine 351 lines the substrate pocket.

Belongs to the class-II pyridoxal-phosphate-dependent aminotransferase family. BioF subfamily. In terms of assembly, homodimer. It depends on pyridoxal 5'-phosphate as a cofactor.

It catalyses the reaction 6-carboxyhexanoyl-[ACP] + L-alanine + H(+) = (8S)-8-amino-7-oxononanoate + holo-[ACP] + CO2. The protein operates within cofactor biosynthesis; biotin biosynthesis. Functionally, catalyzes the decarboxylative condensation of pimeloyl-[acyl-carrier protein] and L-alanine to produce 8-amino-7-oxononanoate (AON), [acyl-carrier protein], and carbon dioxide. The sequence is that of 8-amino-7-oxononanoate synthase from Aliivibrio salmonicida (strain LFI1238) (Vibrio salmonicida (strain LFI1238)).